Reading from the N-terminus, the 123-residue chain is Small ribosomal subunit protein uS13 (123 aa).

A disordered region spans residues 89 to 123 (GRRHRSGLPVRGQRTRTNARTRKGKRKAVAKKKAK). Residues 101 to 123 (QRTRTNARTRKGKRKAVAKKKAK) show a composition bias toward basic residues.

It belongs to the universal ribosomal protein uS13 family. As to quaternary structure, part of the 30S ribosomal subunit. Forms a loose heterodimer with protein S19. Forms two bridges to the 50S subunit in the 70S ribosome.

Its function is as follows. Located at the top of the head of the 30S subunit, it contacts several helices of the 16S rRNA. In the 70S ribosome it contacts the 23S rRNA (bridge B1a) and protein L5 of the 50S subunit (bridge B1b), connecting the 2 subunits; these bridges are implicated in subunit movement. Contacts the tRNAs in the A and P-sites. This is Small ribosomal subunit protein uS13 from Cutibacterium acnes (strain DSM 16379 / KPA171202) (Propionibacterium acnes).